The primary structure comprises 270 residues: MKALKDFMRMKHEGEKISMLTAYDYPSAKQAEAAEIDMILVGDSLGMTVLGYESTVDVTLDDMKHHARAVRRGAKDTYVVVDMPFGTIGIDASTDTAFAIELYRDTHANAIKIEGAHAAPVIKKCHDIGIPVVAHLGLTPQSYGITGYQLQATSKEAAKQLIEDAKLVEKSGAIMLVLEAIPSDLAHVITESLTIPVIGIGAGVGTNGQVLVYHDVLNYGVEHKPKFVKRYGDFSIGVESIKNFHDEVKRQAFPTEEYTYKKQIMNEVDE.

2 residues coordinate Mg(2+): Asp43 and Asp82. Residues 43–44, Asp82, and Lys112 contribute to the 3-methyl-2-oxobutanoate site; that span reads DS. Glu114 serves as a coordination point for Mg(2+). The Proton acceptor role is filled by Glu179.

This sequence belongs to the PanB family. In terms of assembly, homodecamer; pentamer of dimers. Mg(2+) serves as cofactor.

The protein localises to the cytoplasm. It carries out the reaction 3-methyl-2-oxobutanoate + (6R)-5,10-methylene-5,6,7,8-tetrahydrofolate + H2O = 2-dehydropantoate + (6S)-5,6,7,8-tetrahydrofolate. It participates in cofactor biosynthesis; (R)-pantothenate biosynthesis; (R)-pantoate from 3-methyl-2-oxobutanoate: step 1/2. Catalyzes the reversible reaction in which hydroxymethyl group from 5,10-methylenetetrahydrofolate is transferred onto alpha-ketoisovalerate to form ketopantoate. The sequence is that of 3-methyl-2-oxobutanoate hydroxymethyltransferase from Oceanobacillus iheyensis (strain DSM 14371 / CIP 107618 / JCM 11309 / KCTC 3954 / HTE831).